The primary structure comprises 67 residues: Myrmicitoxin(1)-Pm6a (67 aa).

An N-terminal signal peptide occupies residues 1 to 25 (MRSLYLSFSLTIIFVLVIMHAEAKA). Residues 26-37 (ISEPNAIAEADP) constitute a propeptide that is removed on maturation. V66 carries the valine amide modification.

It belongs to the formicidae venom clade 3 family. In terms of tissue distribution, expressed by the venom gland.

Its subcellular location is the secreted. Toxin that causes a rapid and irreversible paralysis when intrathoracically injected into insects (blowflies). Does not cause spontaneous nocifensive behaviors by intraplantar injection in mice. Exhibits hemolytic and cytotoxic activities on HEK293 cells. The polypeptide is Myrmicitoxin(1)-Pm6a (Pogonomyrmex maricopa (Maricopa harvester ant)).